The sequence spans 214 residues: Cytochrome b (214 aa).

Helical transmembrane passes span 31-51 (FGSM…FLAI), 75-96 (WIMQ…YTHI), 111-131 (WLSG…GYVL), and 176-196 (FFAL…IHII). Heme b is bound by residues His81 and His95. His180 and His194 together coordinate heme b. His199 lines the a ubiquinone pocket.

The protein belongs to the cytochrome b family. The cytochrome bc1 complex contains 3 respiratory subunits (MT-CYB, CYC1 and UQCRFS1), 2 core proteins (UQCRC1 and UQCRC2) and probably 6 low-molecular weight proteins. Heme b serves as cofactor.

It localises to the mitochondrion inner membrane. Functionally, component of the ubiquinol-cytochrome c reductase complex (complex III or cytochrome b-c1 complex) that is part of the mitochondrial respiratory chain. The b-c1 complex mediates electron transfer from ubiquinol to cytochrome c. Contributes to the generation of a proton gradient across the mitochondrial membrane that is then used for ATP synthesis. The sequence is that of Cytochrome b (MT-CYB) from Cerastes cerastes (Horned desert viper).